We begin with the raw amino-acid sequence, 313 residues long: E3 ubiquitin-protein ligase RNF126 (313 aa).

N-acetylalanine is present on A2. Position 5 is a phosphoserine (S5). The interval 5-100 (SPQPGRYFCH…FEIPTFPPGA (96 aa)) is required for interaction with BAG6. Residues C13, C16, C29, and C32 each coordinate Zn(2+). The segment at 13–32 (CHCCSVEIVPRLPDYICPRC) adopts a C4-type zinc-finger fold. 2 disordered regions span residues 42 to 63 (EETR…QNRQ) and 95 to 128 (TFPP…RQPR). A compositionally biased stretch (polar residues) spans 47–63 (TENGSAPSTAPTDQNRQ). The span at 103–116 (DDGRDPESRREREH) shows a compositional bias: basic and acidic residues. A compositionally biased stretch (basic residues) spans 117-128 (QSRHRYGARQPR). The sufficient for interaction with AICDA stretch occupies residues 202–306 (TGPPPADKEK…SSSSSSSPSN (105 aa)). The segment at 231–272 (CPVCKEDYALGESVRQLPCNHLFHDSCIVPWLEQHDSCPVCR) adopts an RING-type zinc-finger fold. Residues 279–313 (NTATNPPGLTGVGFSSSSSSSSSSSPSNENATSNS) are disordered. Positions 293 to 313 (SSSSSSSSSSSPSNENATSNS) are enriched in low complexity.

In terms of assembly, interacts with CCDC50, EGFR, FLT3 and SCAMP3. Interacts with BAG6 (via ubiquitin-like domain); required for BAG6-dependent ubiquitination of proteins mislocalized to the cytosol. Interacts with CDKN1A. Interacts with AICDA. Ubiquitinated. May undergo autoubiquitination. In terms of tissue distribution, detected in B-cells (at protein level).

It localises to the cytoplasm. The protein localises to the nucleus. It catalyses the reaction S-ubiquitinyl-[E2 ubiquitin-conjugating enzyme]-L-cysteine + [acceptor protein]-L-lysine = [E2 ubiquitin-conjugating enzyme]-L-cysteine + N(6)-ubiquitinyl-[acceptor protein]-L-lysine.. Its pathway is protein modification; protein ubiquitination. E3 ubiquitin-protein ligase that mediates ubiquitination oF target proteins. Depending on the associated E2 ligase, mediates 'Lys-27'-, 'Lys-29'-, 'Lys-48'- and/or 'Lys-63'-linked polyubiquitination of substrates. Part of a BAG6-dependent quality control process ensuring that proteins of the secretory pathway that are mislocalized to the cytosol are degraded by the proteasome. Probably acts by providing the ubiquitin ligase activity associated with the BAG6 complex and be responsible for ubiquitination of the hydrophobic mislocalized proteins and their targeting to the proteasome. May also play a role in the endosomal recycling of IGF2R, the cation-independent mannose-6-phosphate receptor. May play a role in the endosomal sorting and degradation of several membrane receptors including EGFR, FLT3, MET and CXCR4, by mediating their ubiquitination. By ubiquitinating CDKN1A/p21 and targeting it for degradation, may also promote cell proliferation. May monoubiquitinate AICDA. Acts as a regulator of DNA repair by mediating 'Lys-27'- and 'Lys-29'-linked polyubiquitination of MRE11, thereby promoting the exonuclease activity of MRE11. This Mus musculus (Mouse) protein is E3 ubiquitin-protein ligase RNF126.